The chain runs to 197 residues: ATP-dependent Clp protease proteolytic subunit 2 (197 aa).

Residue S101 is the Nucleophile of the active site. H126 is a catalytic residue.

Belongs to the peptidase S14 family. Fourteen ClpP subunits assemble into 2 heptameric rings which stack back to back to give a disk-like structure with a central cavity, resembling the structure of eukaryotic proteasomes.

It is found in the cytoplasm. The catalysed reaction is Hydrolysis of proteins to small peptides in the presence of ATP and magnesium. alpha-casein is the usual test substrate. In the absence of ATP, only oligopeptides shorter than five residues are hydrolyzed (such as succinyl-Leu-Tyr-|-NHMec, and Leu-Tyr-Leu-|-Tyr-Trp, in which cleavage of the -Tyr-|-Leu- and -Tyr-|-Trp bonds also occurs).. Functionally, cleaves peptides in various proteins in a process that requires ATP hydrolysis. Has a chymotrypsin-like activity. Plays a major role in the degradation of misfolded proteins. The chain is ATP-dependent Clp protease proteolytic subunit 2 from Trichormus variabilis (strain ATCC 29413 / PCC 7937) (Anabaena variabilis).